The primary structure comprises 182 residues: Adenine phosphoribosyltransferase (182 aa).

This sequence belongs to the purine/pyrimidine phosphoribosyltransferase family. Homodimer.

The protein resides in the cytoplasm. The catalysed reaction is AMP + diphosphate = 5-phospho-alpha-D-ribose 1-diphosphate + adenine. The protein operates within purine metabolism; AMP biosynthesis via salvage pathway; AMP from adenine: step 1/1. Catalyzes a salvage reaction resulting in the formation of AMP, that is energically less costly than de novo synthesis. The polypeptide is Adenine phosphoribosyltransferase (Pseudomonas putida (strain GB-1)).